A 195-amino-acid polypeptide reads, in one-letter code: E3 ubiquitin-protein ligase ZNRF1 (195 aa).

Residues 1–10 (MGGKQSSASR) show a composition bias toward polar residues. Disordered regions lie at residues 1–36 (MGGK…HFRA) and 61–84 (PFGL…DSRG). G2 carries the N-myristoyl glycine lipid modification. The segment covering 18 to 29 (VSSDDSAVPPSS) has biased composition (low complexity). The segment at 152–193 (CVICLEELSQGDTIARLPCLCIYHKSCIDSWFEVNRCCPEHP) adopts an RING-type; atypical zinc-finger fold.

The protein localises to the endosome. It localises to the lysosome. It is found in the membrane. The enzyme catalyses S-ubiquitinyl-[E2 ubiquitin-conjugating enzyme]-L-cysteine + [acceptor protein]-L-lysine = [E2 ubiquitin-conjugating enzyme]-L-cysteine + N(6)-ubiquitinyl-[acceptor protein]-L-lysine.. It functions in the pathway protein modification; protein ubiquitination. Functionally, E3 ubiquitin-protein ligase that plays a role in neuron cells differentiation. Plays a role in the establishment and maintenance of neuronal transmission and plasticity. The chain is E3 ubiquitin-protein ligase ZNRF1 (znrf1) from Xenopus tropicalis (Western clawed frog).